Consider the following 118-residue polypeptide: D-dopachrome decarboxylase (118 aa).

Residue Pro2 is modified to N-acetylproline. Residue Lys33 is modified to N6-acetyllysine.

This sequence belongs to the MIF family. As to quaternary structure, homotrimer.

It localises to the cytoplasm. The enzyme catalyses D-dopachrome + H(+) = 5,6-dihydroxyindole + CO2. Its function is as follows. Tautomerization of D-dopachrome with decarboxylation to give 5,6-dihydroxyindole (DHI). The protein is D-dopachrome decarboxylase (DDT) of Bos taurus (Bovine).